The chain runs to 107 residues: UPF0122 protein EAT1b_2891 (107 aa).

Belongs to the UPF0122 family.

Its function is as follows. Might take part in the signal recognition particle (SRP) pathway. This is inferred from the conservation of its genetic proximity to ftsY/ffh. May be a regulatory protein. This chain is UPF0122 protein EAT1b_2891, found in Exiguobacterium sp. (strain ATCC BAA-1283 / AT1b).